Consider the following 167-residue polypeptide: Homing endonuclease I-ApeII (167 aa).

It belongs to the LAGLIDADG endonuclease family.

Functionally, endonuclease involved in rRNA intron I-gamma homing. This Aeropyrum pernix (strain ATCC 700893 / DSM 11879 / JCM 9820 / NBRC 100138 / K1) protein is Homing endonuclease I-ApeII (apeII).